Reading from the N-terminus, the 242-residue chain is UPF0309 protein BOV_A0853 (242 aa).

In terms of domain architecture, SIS spans 30 to 209 (AADLIAAAAR…FADVAARLVG (180 aa)).

The protein belongs to the UPF0309 family.

In Brucella ovis (strain ATCC 25840 / 63/290 / NCTC 10512), this protein is UPF0309 protein BOV_A0853.